Here is a 103-residue protein sequence, read N- to C-terminus: ATP synthase F(0) complex subunit g, mitochondrial (103 aa).

Ala-2 is subject to N-acetylalanine. 3 positions are modified to N6-acetyllysine: Lys-11, Lys-24, and Lys-54.

This sequence belongs to the ATPase g subunit family. In terms of assembly, component of the ATP synthase complex composed at least of ATP5F1A/subunit alpha, ATP5F1B/subunit beta, ATP5MC1/subunit c (homooctomer), MT-ATP6/subunit a, MT-ATP8/subunit 8, ATP5ME/subunit e, ATP5MF/subunit f, ATP5MG/subunit g, ATP5MK/subunit k, ATP5MJ/subunit j, ATP5F1C/subunit gamma, ATP5F1D/subunit delta, ATP5F1E/subunit epsilon, ATP5PF/subunit F6, ATP5PB/subunit b, ATP5PD/subunit d, ATP5PO/subunit OSCP. ATP synthase complex consists of a soluble F(1) head domain (subunits alpha(3) and beta(3)) - the catalytic core - and a membrane F(0) domain - the membrane proton channel (subunits c, a, 8, e, f, g, k and j). These two domains are linked by a central stalk (subunits gamma, delta, and epsilon) rotating inside the F1 region and a stationary peripheral stalk (subunits F6, b, d, and OSCP).

It localises to the mitochondrion. The protein localises to the mitochondrion inner membrane. In terms of biological role, subunit g, of the mitochondrial membrane ATP synthase complex (F(1)F(0) ATP synthase or Complex V) that produces ATP from ADP in the presence of a proton gradient across the membrane which is generated by electron transport complexes of the respiratory chain. ATP synthase complex consist of a soluble F(1) head domain - the catalytic core - and a membrane F(1) domain - the membrane proton channel. These two domains are linked by a central stalk rotating inside the F(1) region and a stationary peripheral stalk. During catalysis, ATP synthesis in the catalytic domain of F(1) is coupled via a rotary mechanism of the central stalk subunits to proton translocation. In vivo, can only synthesize ATP although its ATP hydrolase activity can be activated artificially in vitro. Part of the complex F(0) domain. The sequence is that of ATP synthase F(0) complex subunit g, mitochondrial from Rattus norvegicus (Rat).